We begin with the raw amino-acid sequence, 97 residues long: Large ribosomal subunit protein bL25 (97 aa).

It belongs to the bacterial ribosomal protein bL25 family. As to quaternary structure, part of the 50S ribosomal subunit; part of the 5S rRNA/L5/L18/L25 subcomplex. Contacts the 5S rRNA. Binds to the 5S rRNA independently of L5 and L18.

This is one of the proteins that binds to the 5S RNA in the ribosome where it forms part of the central protuberance. In Buchnera aphidicola subsp. Baizongia pistaciae (strain Bp), this protein is Large ribosomal subunit protein bL25.